Here is an 879-residue protein sequence, read N- to C-terminus: Aminopeptidase M1 (879 aa).

A required for membrane association region spans residues 98 to 205 (HGVGVLKLGF…MSTYLVAIVV (108 aa)). Substrate-binding positions include E138 and 271–275 (GAMEN). H307 is a binding site for Zn(2+). E308 (proton acceptor) is an active-site residue. Positions 311 and 330 each coordinate Zn(2+). A Dileucine internalization motif motif is present at residues 728-729 (LL).

It belongs to the peptidase M1 family. Homodimer. Interacts with N-1-naphthylphthalamic acid (NPA). Zn(2+) serves as cofactor. Ubiquitous with preferential expression in 5 days-old seedlings, roots, young flowers, upper inflorescence stems, and rosette leaves.

It is found in the membrane. The protein localises to the microsome membrane. Its subcellular location is the cytoplasm. The enzyme catalyses Release of an N-terminal amino acid, Xaa-|-Yaa- from a peptide, amide or arylamide. Xaa is preferably Ala, but may be most amino acids including Pro (slow action). When a terminal hydrophobic residue is followed by a prolyl residue, the two may be released as an intact Xaa-Pro dipeptide.. Functionally, metallopeptidase that binds to the auxin transport inhibitor N-1-naphthylphthalamic acid (NPA). Required for embryonic and seedling development as well as cell cycle progression. Homodimerization is required to proper localization and activity. May play a negative role in the regulation of PIN auxin transport proteins. This is Aminopeptidase M1 (APM1) from Arabidopsis thaliana (Mouse-ear cress).